The chain runs to 364 residues: DNA polymerase IV (364 aa).

The UmuC domain occupies 7-187 (IIHVDMDAFY…LPVNRVPGVG (181 aa)). Asp-11 and Asp-105 together coordinate Mg(2+). The active site involves Glu-106.

This sequence belongs to the DNA polymerase type-Y family. In terms of assembly, monomer. The cofactor is Mg(2+).

Its subcellular location is the cytoplasm. The catalysed reaction is DNA(n) + a 2'-deoxyribonucleoside 5'-triphosphate = DNA(n+1) + diphosphate. In terms of biological role, poorly processive, error-prone DNA polymerase involved in untargeted mutagenesis. Copies undamaged DNA at stalled replication forks, which arise in vivo from mismatched or misaligned primer ends. These misaligned primers can be extended by PolIV. Exhibits no 3'-5' exonuclease (proofreading) activity. May be involved in translesional synthesis, in conjunction with the beta clamp from PolIII. This chain is DNA polymerase IV, found in Stenotrophomonas maltophilia (strain K279a).